The following is a 390-amino-acid chain: Chitinase-3-like protein 2 (390 aa).

Residues 1 to 26 (MGATTMDQKSLWAGVVVLLLLQGGSA) form the signal peptide. Positions 27–390 (YKLVCYFTNW…QAVKRSLGSL (364 aa)) constitute a GH18 domain. A disulfide bridge connects residues Cys31 and Cys56. A glycan (N-linked (GlcNAc...) asparagine) is linked at Asn35. Chitin contacts are provided by residues 75–76 (DK), 102–105 (GGYL), Tyr104, Tyr146, 210–213 (LSFD), Asp213, and Trp360.

This sequence belongs to the glycosyl hydrolase 18 family. In terms of tissue distribution, highest expression in chondrocytes, followed by synoviocytes, lung and heart. Not detected in spleen, pancreas, and liver. May also be expressed in developing brain and placenta.

It is found in the secreted. Functionally, lectin that binds chitooligosaccharides and other glycans with high affinity, but not heparin. Has no chitinase activity. This chain is Chitinase-3-like protein 2 (CHI3L2), found in Homo sapiens (Human).